A 485-amino-acid chain; its full sequence is Putative E3 ubiquitin-protein ligase makorin-4 (485 aa).

Residues 1 to 32 (MAEAAAPGTTVTTSGAGAAAAEAAETAEAVSP) show a composition bias toward low complexity. The disordered stretch occupies residues 1 to 63 (MAEAAAPGTT…GSDGSGGRGD (63 aa)). The segment covering 45–63 (AGGGVGGSDGSDGSGGRGD) has biased composition (gly residues). 3 C3H1-type zinc fingers span residues 90–117 (WTKQVTCRYFKYGICKEGDNCRYSHDLS), 124–146 (VCKYFQRGCCVYGDRCRCEHSKP), and 243–270 (ETKKQLCPYAAVGQCRYGENCVYLHGDL). The interval 271-298 (CDMCGLQVLHPMDAAQRSQHIQACIEAH) is makorin-type Cys-His. The RING-type zinc-finger motif lies at 316–370 (CGICMEVVYEKANPNEHRFGILSNCNHTFCLKCIRKWRSAKEFESRIVKSCPQCR). The segment at 399–428 (AMSNKACKYFDEGRGSCPFGENCFYKHMYP) adopts a C3H1-type 4 zinc-finger fold.

It carries out the reaction S-ubiquitinyl-[E2 ubiquitin-conjugating enzyme]-L-cysteine + [acceptor protein]-L-lysine = [E2 ubiquitin-conjugating enzyme]-L-cysteine + N(6)-ubiquitinyl-[acceptor protein]-L-lysine.. It functions in the pathway protein modification; protein ubiquitination. Its function is as follows. May act as a E3 ubiquitin ligase catalyzing the covalent attachment of ubiquitin moieties onto substrate proteins. The chain is Putative E3 ubiquitin-protein ligase makorin-4 (MKRN4P) from Homo sapiens (Human).